The chain runs to 56 residues: Large ribosomal subunit protein bL33 (56 aa).

This sequence belongs to the bacterial ribosomal protein bL33 family.

The polypeptide is Large ribosomal subunit protein bL33 (Rickettsia africae (strain ESF-5)).